Reading from the N-terminus, the 885-residue chain is Protein arg11, mitochondrial (885 aa).

A mitochondrion-targeting transit peptide spans 1–59; that stretch reads MLIELQQIVKSGLVRNGAKHCTKRSLLCSNASVIASKRFQGSFAPGQQQPLNPLAKPIE. The N-acetyltransferase domain occupies 346 to 499; it reads FVINKHDSLD…SDKPFADAII (154 aa). Low complexity predominate over residues 503 to 523; sequence STKPPTASSTTNNPSSSQINQ. The segment at 503–532 is disordered; the sequence is STKPPTASSTTNNPSSSQINQKRSYSTSSL. Cys703 is a catalytic residue.

In the N-terminal section; belongs to the acetylglutamate kinase family. It in the C-terminal section; belongs to the NAGSA dehydrogenase family. The protein precursor is probably cleaved into the two biologically active enzymes, the kinase and the reductase.

It is found in the mitochondrion. The catalysed reaction is N-acetyl-L-glutamate 5-semialdehyde + phosphate + NADP(+) = N-acetyl-L-glutamyl 5-phosphate + NADPH + H(+). It catalyses the reaction N-acetyl-L-glutamate + ATP = N-acetyl-L-glutamyl 5-phosphate + ADP. It functions in the pathway amino-acid biosynthesis; L-arginine biosynthesis; N(2)-acetyl-L-ornithine from L-glutamate: step 2/4. Its pathway is amino-acid biosynthesis; L-arginine biosynthesis; N(2)-acetyl-L-ornithine from L-glutamate: step 3/4. With respect to regulation, the kinase activity is inhibited by arginine. In Schizosaccharomyces pombe (strain 972 / ATCC 24843) (Fission yeast), this protein is Protein arg11, mitochondrial (arg11).